A 340-amino-acid polypeptide reads, in one-letter code: Beta-hexosaminidase (340 aa).

Substrate contacts are provided by residues aspartate 60, arginine 68, arginine 127, and 157–158 (KH). Catalysis depends on histidine 170, which acts as the Proton donor/acceptor. Aspartate 242 (nucleophile) is an active-site residue.

It belongs to the glycosyl hydrolase 3 family. NagZ subfamily.

The protein resides in the cytoplasm. The catalysed reaction is Hydrolysis of terminal non-reducing N-acetyl-D-hexosamine residues in N-acetyl-beta-D-hexosaminides.. The protein operates within cell wall biogenesis; peptidoglycan recycling. Its function is as follows. Plays a role in peptidoglycan recycling by cleaving the terminal beta-1,4-linked N-acetylglucosamine (GlcNAc) from peptide-linked peptidoglycan fragments, giving rise to free GlcNAc, anhydro-N-acetylmuramic acid and anhydro-N-acetylmuramic acid-linked peptides. The chain is Beta-hexosaminidase from Glaesserella parasuis serovar 5 (strain SH0165) (Haemophilus parasuis).